Reading from the N-terminus, the 76-residue chain is Conotoxin Vc6.6 (76 aa).

An N-terminal signal peptide occupies residues methionine 1 to alanine 22. A propeptide spanning residues valine 23–arginine 52 is cleaved from the precursor. 3 disulfides stabilise this stretch: cysteine 53–cysteine 67, cysteine 60–cysteine 71, and cysteine 66–cysteine 75.

This sequence belongs to the conotoxin O1 superfamily. In terms of tissue distribution, expressed by the venom duct.

It localises to the secreted. This is Conotoxin Vc6.6 from Conus victoriae (Queen Victoria cone).